We begin with the raw amino-acid sequence, 350 residues long: N-acetyl-gamma-glutamyl-phosphate reductase (350 aa).

Cys-153 is an active-site residue.

The protein belongs to the NAGSA dehydrogenase family. Type 1 subfamily.

It is found in the cytoplasm. The enzyme catalyses N-acetyl-L-glutamate 5-semialdehyde + phosphate + NADP(+) = N-acetyl-L-glutamyl 5-phosphate + NADPH + H(+). Its pathway is amino-acid biosynthesis; L-arginine biosynthesis; N(2)-acetyl-L-ornithine from L-glutamate: step 3/4. In terms of biological role, catalyzes the NADPH-dependent reduction of N-acetyl-5-glutamyl phosphate to yield N-acetyl-L-glutamate 5-semialdehyde. This chain is N-acetyl-gamma-glutamyl-phosphate reductase, found in Gloeobacter violaceus (strain ATCC 29082 / PCC 7421).